The following is an 89-amino-acid chain: UPF0237 protein Cgl1544/cg1742 (89 aa).

Residues 4–82 enclose the ACT domain; sequence IMTVTGQDHT…LVIRIQSEAL (79 aa).

The protein belongs to the UPF0237 family.

The protein is UPF0237 protein Cgl1544/cg1742 of Corynebacterium glutamicum (strain ATCC 13032 / DSM 20300 / JCM 1318 / BCRC 11384 / CCUG 27702 / LMG 3730 / NBRC 12168 / NCIMB 10025 / NRRL B-2784 / 534).